Consider the following 798-residue polypeptide: Penicillin-binding protein 1A (798 aa).

The Cytoplasmic segment spans residues M1–C9. Residues M10–V30 traverse the membrane as a helical; Signal-anchor for type II membrane protein segment. Topologically, residues T31 to F798 are periplasmic. Positions L50–E218 are transglycosylase. The active-site Proton donor; for transglycosylase activity is the E88. The tract at residues T413–E699 is transpeptidase. The Acyl-ester intermediate; for transpeptidase activity role is filled by S460. The interval T734–F798 is disordered. Residues L782 to F798 are compositionally biased toward polar residues.

This sequence in the N-terminal section; belongs to the glycosyltransferase 51 family. In the C-terminal section; belongs to the transpeptidase family.

It localises to the cell inner membrane. The catalysed reaction is [GlcNAc-(1-&gt;4)-Mur2Ac(oyl-L-Ala-gamma-D-Glu-L-Lys-D-Ala-D-Ala)](n)-di-trans,octa-cis-undecaprenyl diphosphate + beta-D-GlcNAc-(1-&gt;4)-Mur2Ac(oyl-L-Ala-gamma-D-Glu-L-Lys-D-Ala-D-Ala)-di-trans,octa-cis-undecaprenyl diphosphate = [GlcNAc-(1-&gt;4)-Mur2Ac(oyl-L-Ala-gamma-D-Glu-L-Lys-D-Ala-D-Ala)](n+1)-di-trans,octa-cis-undecaprenyl diphosphate + di-trans,octa-cis-undecaprenyl diphosphate + H(+). The enzyme catalyses Preferential cleavage: (Ac)2-L-Lys-D-Ala-|-D-Ala. Also transpeptidation of peptidyl-alanyl moieties that are N-acyl substituents of D-alanine.. It functions in the pathway cell wall biogenesis; peptidoglycan biosynthesis. Functionally, cell wall formation. Synthesis of cross-linked peptidoglycan from the lipid intermediates. The enzyme has a penicillin-insensitive transglycosylase N-terminal domain (formation of linear glycan strands) and a penicillin-sensitive transpeptidase C-terminal domain (cross-linking of the peptide subunits). In Neisseria flavescens, this protein is Penicillin-binding protein 1A (mrcA).